Here is a 315-residue protein sequence, read N- to C-terminus: uncharacterized protein (315 aa).

2 coiled-coil regions span residues 184–212 (AGEE…TPEQ) and 238–275 (EEHR…YKEK).

It belongs to the IIV-6 287R family.

This is an uncharacterized protein from Acheta domesticus (House cricket).